Here is a 34-residue protein sequence, read N- to C-terminus: Photosystem II reaction center protein M (34 aa).

Residues 5 to 25 (ILAFIATALFILVPTAFLLII) traverse the membrane as a helical segment.

It belongs to the PsbM family. PSII is composed of 1 copy each of membrane proteins PsbA, PsbB, PsbC, PsbD, PsbE, PsbF, PsbH, PsbI, PsbJ, PsbK, PsbL, PsbM, PsbT, PsbX, PsbY, PsbZ, Psb30/Ycf12, at least 3 peripheral proteins of the oxygen-evolving complex and a large number of cofactors. It forms dimeric complexes.

The protein localises to the plastid. The protein resides in the chloroplast thylakoid membrane. Functionally, one of the components of the core complex of photosystem II (PSII). PSII is a light-driven water:plastoquinone oxidoreductase that uses light energy to abstract electrons from H(2)O, generating O(2) and a proton gradient subsequently used for ATP formation. It consists of a core antenna complex that captures photons, and an electron transfer chain that converts photonic excitation into a charge separation. This subunit is found at the monomer-monomer interface. This is Photosystem II reaction center protein M from Buxus microphylla (Littleleaf boxwood).